The sequence spans 257 residues: Neurotrophin-3 (257 aa).

The signal sequence occupies residues 1-18; the sequence is MSILFYVIFLAYLRGIQG. Residues 19–138 constitute a propeptide that is removed on maturation; sequence NNMDQRSLPE…VANRTSRRKR (120 aa). The segment at 61 to 81 is disordered; that stretch reads STLPKAEAPREPERGGPAKSA. Residues 67 to 76 are compositionally biased toward basic and acidic residues; it reads EAPREPERGG. Asparagine 131 carries an N-linked (GlcNAc...) asparagine glycan. Intrachain disulfides connect cysteine 152-cysteine 217, cysteine 195-cysteine 246, and cysteine 205-cysteine 248.

Belongs to the NGF-beta family. In terms of tissue distribution, brain and peripheral tissues.

The protein localises to the secreted. Its function is as follows. Seems to promote the survival of visceral and proprioceptive sensory neurons. This chain is Neurotrophin-3 (NTF3), found in Homo sapiens (Human).